The following is a 1478-amino-acid chain: ATP-binding cassette transporter abc2 (1478 aa).

Residues 1 to 25 (MVLEQDLDPFVGGNWMNSAYKGFTF) are Vacuolar-facing. Residues 26-46 (LSATWLAPNIYLLISGCLQYF) form a helical membrane-spanning segment. The Cytoplasmic portion of the chain corresponds to 47–65 (YEVRKRSHYFHFRRFWTIW). The helical transmembrane segment at 66–85 (LKSLVIMVLLFTHIYDCYKT) threads the bilayer. N-linked (GlcNAc...) asparagine glycosylation occurs at Asn-86. The Vacuolar portion of the chain corresponds to 86 to 90 (NESVW). Residues 91-104 (NVLSIITYFLALFL) form a helical membrane-spanning segment. The Cytoplasmic portion of the chain corresponds to 105–116 (HVVEQPTLRIPM). The helical transmembrane segment at 117-137 (ASLLMFWLFKFLASALVLLLR) threads the bilayer. Topologically, residues 138–154 (PNYTMFPMLNVVPSITF) are vacuolar. An N-linked (GlcNAc...) asparagine glycan is attached at Asn-139. Residues 155-175 (FCSLVCLLAEIYVPPANRVWY) form a helical membrane-spanning segment. Over 176–259 (PDDAAELEET…KKSSLYMWGV (84 aa)) the chain is Cytoplasmic. A helical membrane pass occupies residues 260–280 (LFLNHWKLTVVIIVLKLVQDV). Residues 268 to 557 (TVVIIVLKLV…LPIVVSSVLE (290 aa)) enclose the ABC transmembrane type-1 1 domain. The Vacuolar portion of the chain corresponds to 281-310 (VAFIQPNLIRKIVIFVSSYSSEHPQPPQVG). Residues 311–331 (FSLAIAMFLTNVVQTALLQQY) form a helical membrane-spanning segment. At 332 to 387 (FQLGMVLGMRWRSELITAIYRKSLRLSSAARQSRSVGDIVNYMSVDTQKVCDLTMF) the chain is on the cytoplasmic side. Residues 388–408 (LFVIVSGPFQIVLALTNLYHL) traverse the membrane as a helical segment. Residues 409 to 411 (VGY) lie on the Vacuolar side of the membrane. The helical transmembrane segment at 412–432 (GALSGAFVTFLLFPCNVVIAS) threads the bilayer. Residues 433-495 (IFKRFQNRQM…MLKKIGIVNT (63 aa)) are Cytoplasmic-facing. A helical membrane pass occupies residues 496 to 516 (IGNFTWLFAPILVSAATFGTF). Topologically, residues 517–539 (IVLYGKTRVLSVDIVFACLSLFN) are vacuolar. Residues 540-560 (LLQFPLTMLPIVVSSVLEASV) form a helical membrane-spanning segment. At 561–910 (AISRIYGFLT…VKWKVYWTYF (350 aa)) the chain is on the cytoplasmic side. The 229-residue stretch at 593-821 (LEIKKGTFSW…PDSQLFQLLS (229 aa)) folds into the ABC transporter 1 domain. 631-638 (GKVGMGKS) is an ATP binding site. Residues 828-867 (TASSTGADTPLSRSQSVITSSTDVTSSASRSSDTVSNYPK) are disordered. Residues 829 to 840 (ASSTGADTPLSR) show a composition bias toward polar residues. Ser-839, Ser-843, and Ser-863 each carry phosphoserine. Low complexity predominate over residues 841–863 (SQSVITSSTDVTSSASRSSDTVS). Residues 911 to 931 (KACSLFLIFLYFLFIIGGIGM) traverse the membrane as a helical segment. In terms of domain architecture, ABC transmembrane type-1 2 spans 918–1202 (IFLYFLFIIG…VVRQSVDVET (285 aa)). The Vacuolar portion of the chain corresponds to 932-968 (NVGTNVWLKHWSEVNTQLGYNPKPYFYLGIYTLFGLL). A helical membrane pass occupies residues 969 to 990 (SCALISLSSLTITVFCAIKSCR). The Cytoplasmic segment spans residues 991–1033 (YLHDSMVKAVLRAPMSFFETTPTGRILNRFSSDVYRVDEVISR). The chain crosses the membrane as a helical span at residues 1034–1054 (VFMFFFRNLFQIVFVLAVICY). Position 1055 (Ser-1055) is a topological domain, vacuolar. A helical membrane pass occupies residues 1056–1076 (SPMFMILIVPLFFLYRYNQVY). Topologically, residues 1077–1147 (YTQTSRELKR…SSNRWQAIRV (71 aa)) are cytoplasmic. Residues 1148–1168 (EAIGALVVFSSAFFGVLSAVR) traverse the membrane as a helical segment. The Vacuolar portion of the chain corresponds to 1169–1172 (GNPN). A helical transmembrane segment spans residues 1173–1193 (SGLVGLSLSYAVQITQSLTFV). Residues 1194-1478 (VRQSVDVETN…YSLAKESGLI (285 aa)) lie on the Cytoplasmic side of the membrane. The region spanning 1239-1473 (IKFDHYSVRY…KASLFYSLAK (235 aa)) is the ABC transporter 2 domain. 1273–1280 (GRTGAGKS) contributes to the ATP binding site.

This sequence belongs to the ABC transporter superfamily. ABCC family. Conjugate transporter (TC 3.A.1.208) subfamily.

It localises to the vacuole membrane. Involved in vacuolar sequestration of glutathione S-conjugates. Together with abc4, required for accumulation of a red pigment (ade pigment) in the vacuole of a mutant affected in the adenine biosynthetic pathway. The sequence is that of ATP-binding cassette transporter abc2 (abc2) from Schizosaccharomyces pombe (strain 972 / ATCC 24843) (Fission yeast).